An 805-amino-acid polypeptide reads, in one-letter code: Angiotensin-converting enzyme 2 (805 aa).

The signal sequence occupies residues 1-17 (MSGSFWLLLSFAALTAA). Residues 18–740 (QSTTEELAKT…LSPPYRPPVT (723 aa)) lie on the Extracellular side of the membrane. The Peptidase M2 domain maps to 19-607 (STTEELAKTF…QNRNSFVGWD (589 aa)). An interaction with SARS S protein region spans residues 30 to 41 (ETFNYEAQELSY). Residue asparagine 53 is glycosylated (N-linked (GlcNAc...) asparagine). 2 interaction with SARS S protein regions span residues 82–84 (TYP) and 90–93 (DAKI). Cysteine 133 and cysteine 141 form a disulfide bridge. Chloride is bound at residue arginine 169. N-linked (GlcNAc...) asparagine glycosylation is present at asparagine 216. Arginine 273 is a substrate binding site. Asparagine 322 is a glycosylation site (N-linked (GlcNAc...) asparagine). Cysteine 344 and cysteine 361 are joined by a disulfide. 345-346 (HP) is a binding site for substrate. Positions 353–357 (KGDFR) are interaction with SARS S protein. Residue histidine 374 participates in Zn(2+) binding. The active-site Proton acceptor is the glutamate 375. Zn(2+) is bound by residues histidine 378 and glutamate 402. Chloride is bound by residues tryptophan 477 and lysine 481. Histidine 505 serves as the catalytic Proton donor. Position 515 (tyrosine 515) interacts with substrate. Cysteine 530 and cysteine 542 are oxidised to a cystine. Residue asparagine 546 is glycosylated (N-linked (GlcNAc...) asparagine). One can recognise a Collectrin-like domain in the interval 614–805 (SDQSIKVRIS…QHADDVQTSF (192 aa)). The interval 652 to 659 (REYFSKVK) is essential for cleavage by ADAM17. Residues asparagine 660 and asparagine 690 are each glycosylated (N-linked (GlcNAc...) asparagine). Residues 697–716 (RSEVEDAIRMSRSRINDAFR) are essential for cleavage by TMPRSS11D and TMPRSS2. A helical transmembrane segment spans residues 741–761 (IWLIVFGVVMGAIVVGIVLLI). The Cytoplasmic segment spans residues 762 to 805 (VSGIRNRRKNDQAGSEENPYASVDLNKGENNPGFQHADDVQTSF). Positions 771 to 805 (NDQAGSEENPYASVDLNKGENNPGFQHADDVQTSF) are disordered. An LIR motif is present at residues 778-786 (ENPYASVDL). Tyrosine 781 bears the Phosphotyrosine mark. The short motif at 781–784 (YASV) is the Endocytic sorting signal element. An SH2-binding motif is present at residues 781–785 (YASVD). Serine 783 carries the phosphoserine modification. The PTB signature appears at 792–795 (NPGF). The PDZ-binding signature appears at 803-805 (TSF).

The protein belongs to the peptidase M2 family. In terms of assembly, homodimer. Interacts with the catalytically active form of TMPRSS2. Interacts with SLC6A19; this interaction is essential for expression and function of SLC6A19 in intestine. Interacts with ITGA5:ITGB1. Probably interacts (via endocytic sorting signal motif) with AP2M1; the interaction is inhibited by phosphorylation of Tyr-781. Interacts (via PDZ-binding motif) with NHERF1 (via PDZ domains); the interaction may enhance ACE2 membrane residence. As to quaternary structure, (Microbial infection) Interacts with SARS-CoV S protein. Requires Zn(2+) as cofactor. Chloride is required as a cofactor. Proteolytic cleavage by ADAM17 generates a secreted form. Also cleaved by serine proteases: TMPRSS2, TMPRSS11D and HPN/TMPRSS1. Post-translationally, phosphorylated. Phosphorylation at Tyr-781 probably inhibits interaction with AP2M1 and enables interactions with proteins containing SH2 domains.

The protein localises to the secreted. It localises to the cell membrane. Its subcellular location is the cytoplasm. The protein resides in the cell projection. It is found in the cilium. The protein localises to the apical cell membrane. The catalysed reaction is angiotensin II + H2O = angiotensin-(1-7) + L-phenylalanine. The enzyme catalyses angiotensin I + H2O = angiotensin-(1-9) + L-leucine. Essential counter-regulatory carboxypeptidase of the renin-angiotensin hormone system that is a critical regulator of blood volume, systemic vascular resistance, and thus cardiovascular homeostasis. Converts angiotensin I to angiotensin 1-9, a nine-amino acid peptide with anti-hypertrophic effects in cardiomyocytes, and angiotensin II to angiotensin 1-7, which then acts as a beneficial vasodilator and anti-proliferation agent, counterbalancing the actions of the vasoconstrictor angiotensin II. Also removes the C-terminal residue from three other vasoactive peptides, neurotensin, kinetensin, and des-Arg bradykinin, but is not active on bradykinin. Also cleaves other biological peptides, such as apelins, casomorphins and dynorphin A. Plays an important role in amino acid transport by acting as binding partner of amino acid transporter SLC6A19 in intestine, regulating trafficking, expression on the cell surface, and its catalytic activity. Functionally, (Microbial infection) Acts as a receptor for human coronavirus SARS. The chain is Angiotensin-converting enzyme 2 (ACE2) from Paguma larvata (Masked palm civet).